Here is a 149-residue protein sequence, read N- to C-terminus: Large ribosomal subunit protein uL13 (149 aa).

This sequence belongs to the universal ribosomal protein uL13 family. Part of the 50S ribosomal subunit.

This protein is one of the early assembly proteins of the 50S ribosomal subunit, although it is not seen to bind rRNA by itself. It is important during the early stages of 50S assembly. The sequence is that of Large ribosomal subunit protein uL13 from Chlorobium chlorochromatii (strain CaD3).